Consider the following 295-residue polypeptide: Indole-3-glycerol phosphate synthase (295 aa).

This sequence belongs to the TrpC family.

The catalysed reaction is 1-(2-carboxyphenylamino)-1-deoxy-D-ribulose 5-phosphate + H(+) = (1S,2R)-1-C-(indol-3-yl)glycerol 3-phosphate + CO2 + H2O. Its pathway is amino-acid biosynthesis; L-tryptophan biosynthesis; L-tryptophan from chorismate: step 4/5. This Prochlorococcus marinus (strain MIT 9515) protein is Indole-3-glycerol phosphate synthase.